A 344-amino-acid chain; its full sequence is 17-beta-hydroxysteroid dehydrogenase type 1 (344 aa).

3-32 (PTVVLITGCSSGIGMHLAVRLASDRSQSFK) contributes to the NAD(+) binding site. NADP(+) contacts are provided by residues 10–38 (GCSS…ATLR) and aspartate 66. Residue serine 135 is modified to Phosphoserine. Serine 143 provides a ligand contact to substrate. The active-site Proton acceptor is tyrosine 156. Lysine 160 is an NADP(+) binding site.

The protein belongs to the short-chain dehydrogenases/reductases (SDR) family. As to quaternary structure, homodimer. Exists predominantly as a homodimer but also exits as monomer.

The protein resides in the cytoplasm. It carries out the reaction 17beta-estradiol + NAD(+) = estrone + NADH + H(+). The enzyme catalyses 17beta-estradiol + NADP(+) = estrone + NADPH + H(+). The catalysed reaction is testosterone + NADP(+) = androst-4-ene-3,17-dione + NADPH + H(+). The protein operates within steroid biosynthesis; estrogen biosynthesis. Its function is as follows. Favors the reduction of estrogens and androgens. Converts estrone (E1) to a more potent estrogen, 17beta-estradiol (E2). Also has 20-alpha-HSD activity. Uses preferentially NADH. This Mus musculus (Mouse) protein is 17-beta-hydroxysteroid dehydrogenase type 1.